The following is a 137-amino-acid chain: Drosulfakinins (137 aa).

The first 31 residues, methionine 1–alanine 31, serve as a signal peptide directing secretion. Positions glutamine 32–arginine 74 are excised as a propeptide. Phenylalanine 81 carries the post-translational modification Phenylalanine amide. A propeptide spanning residues valine 85–alanine 107 is cleaved from the precursor. Residue tyrosine 113 is modified to Sulfotyrosine. Phenylalanine 118 carries the phenylalanine amide modification. The residue at position 130 (tyrosine 130) is a Sulfotyrosine. Residue phenylalanine 135 is modified to Phenylalanine amide.

The protein belongs to the gastrin/cholecystokinin family.

Its subcellular location is the secreted. Drosulfakinin-0 (DSK 0) plays diverse biological roles including regulating gut muscle contraction in adults but not in larvae. The protein is Drosulfakinins of Drosophila yakuba (Fruit fly).